We begin with the raw amino-acid sequence, 411 residues long: LIM domain-binding protein 1 (411 aa).

Ser2 carries the post-translational modification N-acetylserine. A Phosphothreonine modification is found at Thr61. Phosphoserine is present on residues Ser265 and Ser302. Disordered stretches follow at residues 284-330 (PPAE…TFAL) and 367-411 (DAAN…QASQ). Residues 302–318 (SGGSTMSSGGGNTNNSN) are compositionally biased toward low complexity. In terms of domain architecture, LIM interaction domain (LID) spans 336 to 375 (DVMVVGEPTLMGGEFGDEDERLITRLENTQFDAANGIDDE).

Belongs to the LDB family. In terms of assembly, interacts with ESR1. Forms homodimers and heterodimers. Interacts with and activates LHX1/LIM1. Interacts with the LIM domains of ISL1 and LMO2. Can assemble in a complex with LMO2 and TAL1/SCL but does not interact with TAL1/SCL directly. Strongly interacts with the LIM2 domain of LMX1A and more weakly with the LIM1 domain. Homodimerization is not required for, and does not effect, LMX1A-binding. Component of a nuclear TAL-1 complex composed at least of CBFA2T3, LDB1, TAL1 and TCF3. Interacts with LHX6 and LHX9. At neuronal promoters, forms a complex with LHX3 involved in the specification of interneurons, in motor neurons, it is displaced by ISL1 to form a ternary complex in which ISL1 contacts both LHX3 and LDB1. Interacts with SLK; leading to negatively regulate SLK kinase activity. Interacts with YWHAZ. Interacts with PRDM1/BLIMP1. Interacts with LMO4. Interacts with RLIM/RNF12; the interaction inhibits the ubiquitination of LMO proteins. Ubiquitinated by RLIM/RNF12, leading to its degradation by the proteasome. As to expression, expressed in multiple adult tissues including heart, brain, liver, kidney, testis, lung and muscle, with expression highest in the pituitary gland and skin.

It is found in the nucleus. Functionally, binds to the LIM domain of a wide variety of LIM domain-containing transcription factors. May regulate the transcriptional activity of LIM-containing proteins by determining specific partner interactions. Plays a role in the development of interneurons and motor neurons in cooperation with LHX3 and ISL1. Acts synergistically with LHX1/LIM1 in axis formation and activation of gene expression. Acts with LMO2 in the regulation of red blood cell development, maintaining erythroid precursors in an immature state. This is LIM domain-binding protein 1 (Ldb1) from Mus musculus (Mouse).